The following is a 126-amino-acid chain: Aspartate 1-decarboxylase (126 aa).

Ser-25 acts as the Schiff-base intermediate with substrate; via pyruvic acid in catalysis. At Ser-25 the chain carries Pyruvic acid (Ser). A substrate-binding site is contributed by Thr-57. Catalysis depends on Tyr-58, which acts as the Proton donor. 73 to 75 (GGA) serves as a coordination point for substrate.

This sequence belongs to the PanD family. As to quaternary structure, heterooctamer of four alpha and four beta subunits. Requires pyruvate as cofactor. Post-translationally, is synthesized initially as an inactive proenzyme, which is activated by self-cleavage at a specific serine bond to produce a beta-subunit with a hydroxyl group at its C-terminus and an alpha-subunit with a pyruvoyl group at its N-terminus.

It localises to the cytoplasm. It catalyses the reaction L-aspartate + H(+) = beta-alanine + CO2. Its pathway is cofactor biosynthesis; (R)-pantothenate biosynthesis; beta-alanine from L-aspartate: step 1/1. Its function is as follows. Catalyzes the pyruvoyl-dependent decarboxylation of aspartate to produce beta-alanine. The sequence is that of Aspartate 1-decarboxylase from Xanthomonas axonopodis pv. citri (strain 306).